A 326-amino-acid polypeptide reads, in one-letter code: Phospho-N-acetylmuramoyl-pentapeptide-transferase (326 aa).

The next 10 membrane-spanning stretches (helical) occupy residues 4–24, 49–69, 74–94, 109–129, 151–171, 179–199, 203–223, 228–248, 254–274, and 303–323; these read IWVA…LVIP, TPTM…FLLI, GLIV…DDYI, KLLG…FEAG, LGWW…SNAV, GLAA…ALAA, GVAA…FFNF, VFMG…AAVV, LFLI…IQVI, and VVIT…AGLY.

The protein belongs to the glycosyltransferase 4 family. MraY subfamily. Mg(2+) serves as cofactor.

It localises to the cell membrane. The enzyme catalyses UDP-N-acetyl-alpha-D-muramoyl-L-alanyl-gamma-D-glutamyl-meso-2,6-diaminopimeloyl-D-alanyl-D-alanine + di-trans,octa-cis-undecaprenyl phosphate = di-trans,octa-cis-undecaprenyl diphospho-N-acetyl-alpha-D-muramoyl-L-alanyl-D-glutamyl-meso-2,6-diaminopimeloyl-D-alanyl-D-alanine + UMP. It participates in cell wall biogenesis; peptidoglycan biosynthesis. Functionally, catalyzes the initial step of the lipid cycle reactions in the biosynthesis of the cell wall peptidoglycan: transfers peptidoglycan precursor phospho-MurNAc-pentapeptide from UDP-MurNAc-pentapeptide onto the lipid carrier undecaprenyl phosphate, yielding undecaprenyl-pyrophosphoryl-MurNAc-pentapeptide, known as lipid I. This chain is Phospho-N-acetylmuramoyl-pentapeptide-transferase, found in Pelotomaculum thermopropionicum (strain DSM 13744 / JCM 10971 / SI).